The following is a 612-amino-acid chain: Dihydroxy-acid dehydratase (612 aa).

Position 81 (Asp-81) interacts with Mg(2+). A [2Fe-2S] cluster-binding site is contributed by Cys-122. 2 residues coordinate Mg(2+): Asp-123 and Lys-124. N6-carboxylysine is present on Lys-124. Cys-193 is a [2Fe-2S] cluster binding site. Glu-489 is a binding site for Mg(2+). The Proton acceptor role is filled by Ser-515.

Belongs to the IlvD/Edd family. As to quaternary structure, homodimer. [2Fe-2S] cluster serves as cofactor. Requires Mg(2+) as cofactor.

It catalyses the reaction (2R)-2,3-dihydroxy-3-methylbutanoate = 3-methyl-2-oxobutanoate + H2O. The catalysed reaction is (2R,3R)-2,3-dihydroxy-3-methylpentanoate = (S)-3-methyl-2-oxopentanoate + H2O. It participates in amino-acid biosynthesis; L-isoleucine biosynthesis; L-isoleucine from 2-oxobutanoate: step 3/4. It functions in the pathway amino-acid biosynthesis; L-valine biosynthesis; L-valine from pyruvate: step 3/4. Its function is as follows. Functions in the biosynthesis of branched-chain amino acids. Catalyzes the dehydration of (2R,3R)-2,3-dihydroxy-3-methylpentanoate (2,3-dihydroxy-3-methylvalerate) into 2-oxo-3-methylpentanoate (2-oxo-3-methylvalerate) and of (2R)-2,3-dihydroxy-3-methylbutanoate (2,3-dihydroxyisovalerate) into 2-oxo-3-methylbutanoate (2-oxoisovalerate), the penultimate precursor to L-isoleucine and L-valine, respectively. The protein is Dihydroxy-acid dehydratase of Xanthomonas campestris pv. campestris (strain 8004).